Consider the following 337-residue polypeptide: Phosphate acyltransferase (337 aa).

The protein belongs to the PlsX family. In terms of assembly, homodimer. Probably interacts with PlsY.

The protein resides in the cytoplasm. The catalysed reaction is a fatty acyl-[ACP] + phosphate = an acyl phosphate + holo-[ACP]. It functions in the pathway lipid metabolism; phospholipid metabolism. Its function is as follows. Catalyzes the reversible formation of acyl-phosphate (acyl-PO(4)) from acyl-[acyl-carrier-protein] (acyl-ACP). This enzyme utilizes acyl-ACP as fatty acyl donor, but not acyl-CoA. The chain is Phosphate acyltransferase from Aromatoleum aromaticum (strain DSM 19018 / LMG 30748 / EbN1) (Azoarcus sp. (strain EbN1)).